We begin with the raw amino-acid sequence, 118 residues long: Ribonuclease P protein component (118 aa).

It belongs to the RnpA family. In terms of assembly, consists of a catalytic RNA component (M1 or rnpB) and a protein subunit.

The enzyme catalyses Endonucleolytic cleavage of RNA, removing 5'-extranucleotides from tRNA precursor.. Functionally, RNaseP catalyzes the removal of the 5'-leader sequence from pre-tRNA to produce the mature 5'-terminus. It can also cleave other RNA substrates such as 4.5S RNA. The protein component plays an auxiliary but essential role in vivo by binding to the 5'-leader sequence and broadening the substrate specificity of the ribozyme. This is Ribonuclease P protein component from Mycoplasma pneumoniae (strain ATCC 29342 / M129 / Subtype 1) (Mycoplasmoides pneumoniae).